Reading from the N-terminus, the 279-residue chain is Large ribosomal subunit protein uL2 (279 aa).

2 disordered regions span residues 32-58 (SLLTPLPKKGGRNAHGRITARHQGGGH) and 223-279 (GVAM…RKRG). 2 stretches are compositionally biased toward basic residues: residues 40–58 (KGGRNAHGRITARHQGGGH) and 269–279 (VRRRYATRKRG).

It belongs to the universal ribosomal protein uL2 family. Part of the 50S ribosomal subunit. Forms a bridge to the 30S subunit in the 70S ribosome.

Functionally, one of the primary rRNA binding proteins. Required for association of the 30S and 50S subunits to form the 70S ribosome, for tRNA binding and peptide bond formation. It has been suggested to have peptidyltransferase activity; this is somewhat controversial. Makes several contacts with the 16S rRNA in the 70S ribosome. The chain is Large ribosomal subunit protein uL2 from Salinispora tropica (strain ATCC BAA-916 / DSM 44818 / JCM 13857 / NBRC 105044 / CNB-440).